Here is a 192-residue protein sequence, read N- to C-terminus: uncharacterized protein (192 aa).

Residues 53 to 111 adopt a coiled-coil conformation; the sequence is CLKESVERARKVYLSLLKDYERKSREYEKAYENYLKELRTYRETLYRIKEDLKFYERIC.

This is an uncharacterized protein from Aquifex aeolicus (strain VF5).